We begin with the raw amino-acid sequence, 517 residues long: Quinol oxidase subunit 1 (517 aa).

12 helical membrane-spanning segments follow: residues Val19–Met39, Ile64–Phe84, Gln98–Pro118, Met150–Ile170, Ile185–Ala205, Trp226–Phe246, Ile271–Leu291, Thr303–Thr323, Val333–Val353, Val369–Phe389, Ile412–Gly432, and Ile460–Ala480. Position 65 (His65) interacts with Fe(II)-heme a. The Cu cation site is built by His235, Tyr239, His284, and His285. The 1'-histidyl-3'-tyrosine (His-Tyr) cross-link spans His235–Tyr239. His372 contacts heme a3. Residue His374 coordinates Fe(II)-heme a.

It belongs to the heme-copper respiratory oxidase family.

It is found in the cell membrane. The catalysed reaction is 2 a quinol + O2 = 2 a quinone + 2 H2O. Functionally, catalyzes the reduction of oxygen to water. Subunits I, II and III form the functional core of the enzyme complex. Electrons originating in caldariella quinol are transferred to the binuclear center formed by heme A3 and Cu(B). In terms of biological role, subunit I binds heme a and the bimetallic center. This chain is Quinol oxidase subunit 1 (soxB), found in Sulfolobus acidocaldarius (strain ATCC 33909 / DSM 639 / JCM 8929 / NBRC 15157 / NCIMB 11770).